A 208-amino-acid chain; its full sequence is High frequency lysogenization protein HflD homolog (208 aa).

The protein belongs to the HflD family.

Its subcellular location is the cytoplasm. It localises to the cell inner membrane. The protein is High frequency lysogenization protein HflD homolog of Pseudomonas putida (strain ATCC 700007 / DSM 6899 / JCM 31910 / BCRC 17059 / LMG 24140 / F1).